We begin with the raw amino-acid sequence, 555 residues long: Glutamine--tRNA ligase (555 aa).

The short motif at 35–45 (PEPNGYLHIGH) is the 'HIGH' region element. Residues 36–38 (EPN) and 42–48 (HIGHAKS) each bind ATP. Aspartate 68 and tyrosine 213 together coordinate L-glutamine. ATP is bound by residues threonine 232 and 262 to 263 (RL). A 'KMSKS' region motif is present at residues 269-273 (ITSKR).

This sequence belongs to the class-I aminoacyl-tRNA synthetase family. As to quaternary structure, monomer.

It localises to the cytoplasm. The catalysed reaction is tRNA(Gln) + L-glutamine + ATP = L-glutaminyl-tRNA(Gln) + AMP + diphosphate. This Stutzerimonas stutzeri (strain A1501) (Pseudomonas stutzeri) protein is Glutamine--tRNA ligase.